The primary structure comprises 534 residues: MKYIIVTGGVMSGLGKGITTASVGRNLKNKGYKVTAIKIDPYINIDAGTMSPYQHGEVYVLKDGGEVDLDLGNYERFLDTELTRDHNLTTGKIYQTVIDKERKGEYLGKTVQIIPHITNEIKDRIRRIAAKSGADVCLIEVGGTVGDIESMPFLEAVRQMYREESPENIALLHVTLVPIDSQGDQKTKPTQHSVKELRELGLTPHVIVSRCKKALMESTRSKIALFCDVPVEAVISAHDSADIYEVPLQLENEGLSNYLLKKLILKSTLEDTNWEEMVIRMNNCTGNVNVAIVGKYTHLEDSYISIVESLKHGAIEIGCKFEITWFDAESFDDDPSEVEKLNGFDGILVPGGFGERGTEGKMLAIKYARENNIPYLGLCLGMQLAVIEFARNVVGLDGANSSEFDENTPYPVIDLLPEQEDVVDMGATMRLGDYEATLKAGSLAESIYGASLITERHRHRYEVNPNYVDRIEEHGMIFSGKNKNRMEIAEVPSKDFYFASQFHPEFKSRPGRPSPPFKAFMGAMLKKSKEKKDQ.

The interval methionine 1–leucine 265 is amidoligase domain. Position 12 (serine 12) interacts with CTP. Serine 12 is a binding site for UTP. ATP is bound at residue glycine 13–isoleucine 18. An L-glutamine-binding site is contributed by tyrosine 53. Aspartate 70 contacts ATP. Aspartate 70 and glutamate 140 together coordinate Mg(2+). CTP contacts are provided by residues aspartate 147–glutamate 149, lysine 186–glutamine 191, and lysine 222. UTP contacts are provided by residues lysine 186–glutamine 191 and lysine 222. Residues asparagine 289–glutamate 530 form the Glutamine amidotransferase type-1 domain. L-glutamine is bound at residue glycine 352. Catalysis depends on cysteine 379, which acts as the Nucleophile; for glutamine hydrolysis. Residues leucine 380 to glutamine 383, glutamate 403, and arginine 460 contribute to the L-glutamine site. Active-site residues include histidine 503 and glutamate 505.

Belongs to the CTP synthase family. In terms of assembly, homotetramer.

It carries out the reaction UTP + L-glutamine + ATP + H2O = CTP + L-glutamate + ADP + phosphate + 2 H(+). It catalyses the reaction L-glutamine + H2O = L-glutamate + NH4(+). The enzyme catalyses UTP + NH4(+) + ATP = CTP + ADP + phosphate + 2 H(+). It participates in pyrimidine metabolism; CTP biosynthesis via de novo pathway; CTP from UDP: step 2/2. With respect to regulation, allosterically activated by GTP, when glutamine is the substrate; GTP has no effect on the reaction when ammonia is the substrate. The allosteric effector GTP functions by stabilizing the protein conformation that binds the tetrahedral intermediate(s) formed during glutamine hydrolysis. Inhibited by the product CTP, via allosteric rather than competitive inhibition. Its function is as follows. Catalyzes the ATP-dependent amination of UTP to CTP with either L-glutamine or ammonia as the source of nitrogen. Regulates intracellular CTP levels through interactions with the four ribonucleotide triphosphates. The polypeptide is CTP synthase (Methanococcoides burtonii (strain DSM 6242 / NBRC 107633 / OCM 468 / ACE-M)).